The sequence spans 317 residues: Melanocyte-stimulating hormone receptor (317 aa).

At 1–37 (MPVQGSQRRLLGSLNSTPTATPHLGLAANQTGARCLE) the chain is on the extracellular side. A glycan (N-linked (GlcNAc...) asparagine) is linked at Asn-29. The helical transmembrane segment at 38-63 (VSIPDGLFLSLGLVSLVENVLVVTAI) threads the bilayer. Residues 64–72 (AKNRNLHSP) lie on the Cytoplasmic side of the membrane. Residues 73–93 (MYCFICCLALSDLLVSGSNML) traverse the membrane as a helical segment. Over 94–118 (ETAVILLLEAGALAARAAVVQQLDN) the chain is Extracellular. A helical membrane pass occupies residues 119-140 (VIDVITCSSMLSSLCFLGAIAV). At 141 to 163 (DRYISIFYALRYHSIVTLPRARR) the chain is on the cytoplasmic side. A helical membrane pass occupies residues 164-183 (AVAAIWVASVLFSMLFIAYY). Residues 184–191 (DHAAVLLC) are Extracellular-facing. The helical transmembrane segment at 192-211 (LVVFFLAMLVLMAVLYVHML) threads the bilayer. Topologically, residues 212–240 (ARACQHAQGIARLHKRQRPAHQSFGLKGA) are cytoplasmic. A helical membrane pass occupies residues 241–266 (ATLTILLGIFFLCWGPFFLHLTLIVL). The Extracellular segment spans residues 267–279 (CPQHPTCSCIFKN). The chain crosses the membrane as a helical span at residues 280–300 (FNLFLTLIICNAIIDPLIYAF). Residues 301–317 (RSQELRRTLKEVLLCSW) lie on the Cytoplasmic side of the membrane. The S-palmitoyl cysteine moiety is linked to residue Cys-315.

The protein belongs to the G-protein coupled receptor 1 family. As to quaternary structure, interacts with MGRN1, but does not undergo MGRN1-mediated ubiquitination; this interaction competes with GNAS-binding and thus inhibits agonist-induced cAMP production. Interacts with OPN3; the interaction results in a decrease in MC1R-mediated cAMP signaling and ultimately a decrease in melanin production in melanocytes.

The protein resides in the cell membrane. In terms of biological role, receptor for MSH (alpha, beta and gamma) and ACTH. The activity of this receptor is mediated by G proteins which activate adenylate cyclase. Mediates melanogenesis, the production of eumelanin (black/brown) and phaeomelanin (red/yellow), via regulation of cAMP signaling in melanocytes. This Erythrocebus patas (Red guenon) protein is Melanocyte-stimulating hormone receptor (MC1R).